The following is a 162-amino-acid chain: Flagellar assembly factor FliW (162 aa).

This sequence belongs to the FliW family. Interacts with translational regulator CsrA and flagellin(s).

Its subcellular location is the cytoplasm. Its function is as follows. Acts as an anti-CsrA protein, binds CsrA and prevents it from repressing translation of its target genes, one of which is flagellin. Binds to flagellin and participates in the assembly of the flagellum. The sequence is that of Flagellar assembly factor FliW from Alkaliphilus metalliredigens (strain QYMF).